The sequence spans 185 residues: Ribosome-recycling factor (185 aa).

It belongs to the RRF family.

The protein resides in the cytoplasm. Functionally, responsible for the release of ribosomes from messenger RNA at the termination of protein biosynthesis. May increase the efficiency of translation by recycling ribosomes from one round of translation to another. The chain is Ribosome-recycling factor from Roseiflexus sp. (strain RS-1).